A 223-amino-acid chain; its full sequence is Mediator of RNA polymerase II transcription subunit 8 (223 aa).

Residues 2–138 (SQSTASLVPE…VRETSGVTTA (137 aa)) form an interaction with TBP1 region. Positions 33 to 59 (LDAVRMRLAQLTHSLRRIRDEMSKAEL) form a coiled coil.

The protein belongs to the Mediator complex subunit 8 family. In terms of assembly, component of the Mediator complex, which is composed of at least 21 subunits that form three structurally distinct submodules. The Mediator head module contains MED6, MED8, MED11, SRB4/MED17, SRB5/MED18, ROX3/MED19, SRB2/MED20 and SRB6/MED22, the middle module contains MED1, MED4, NUT1/MED5, MED7, CSE2/MED9, NUT2/MED10, SRB7/MED21 and SOH1/MED31, and the tail module contains MED2, PGD1/MED3, RGR1/MED14, GAL11/MED15 and SIN4/MED16. The head and the middle modules interact directly with RNA polymerase II, whereas the elongated tail module interacts with gene-specific regulatory proteins. MED8 interacts directly with SRB5/MED18. Also interacts with Hexokinase B (HXK2). Interacts with TBP1.

It is found in the nucleus. Component of the Mediator complex, a coactivator involved in the regulated transcription of nearly all RNA polymerase II-dependent genes. Mediator functions as a bridge to convey information from gene-specific regulatory proteins to the basal RNA polymerase II transcription machinery. The Mediator complex, having a compact conformation in its free form, is recruited to promoters by direct interactions with regulatory proteins and serves for the assembly of a functional preinitiation complex with RNA polymerase II and the general transcription factors. The Mediator complex unfolds to an extended conformation and partially surrounds RNA polymerase II, specifically interacting with the unphosphorylated form of the C-terminal domain (CTD) of RNA polymerase II. The Mediator complex dissociates from the RNA polymerase II holoenzyme and stays at the promoter when transcriptional elongation begins. MED8 binds to the consensus sequence 5'-[AC][AG]GAAAT-3' in both the UAS of SUC2 and the DRS2 of HXK2. This is Mediator of RNA polymerase II transcription subunit 8 (MED8) from Saccharomyces cerevisiae (strain ATCC 204508 / S288c) (Baker's yeast).